We begin with the raw amino-acid sequence, 195 residues long: Probable GTP-binding protein EngB (195 aa).

The EngB-type G domain occupies 24 to 195; that stretch reads GLSEVALSGR…QIWDLIANYL (172 aa). GTP is bound by residues 32-39, 59-63, 77-80, 144-147, and 176-178; these read GRSNVGKS, GKTQT, DVPG, TKED, and YSS. Positions 39 and 61 each coordinate Mg(2+).

The protein belongs to the TRAFAC class TrmE-Era-EngA-EngB-Septin-like GTPase superfamily. EngB GTPase family. Requires Mg(2+) as cofactor.

In terms of biological role, necessary for normal cell division and for the maintenance of normal septation. The sequence is that of Probable GTP-binding protein EngB from Staphylococcus haemolyticus (strain JCSC1435).